The chain runs to 378 residues: 1-acyl-sn-glycerol-3-phosphate acyltransferase delta (378 aa).

The helical transmembrane segment at 11 to 31 (FLCHLVFCYVFIASGLIINTV) threads the bilayer. The HXXXXD motif signature appears at 96–101 (HKFEID). The next 3 helical transmembrane spans lie at 125–145 (ELAY…VFCS), 307–327 (TLVN…QFLV), and 338–358 (LASF…MIGV).

Belongs to the 1-acyl-sn-glycerol-3-phosphate acyltransferase family.

The protein resides in the endoplasmic reticulum membrane. It catalyses the reaction a 1-acyl-sn-glycero-3-phosphate + an acyl-CoA = a 1,2-diacyl-sn-glycero-3-phosphate + CoA. The enzyme catalyses (4Z,7Z,10Z,13Z,16Z,19Z)-docosahexaenoyl-CoA + 1-hexadecanoyl-sn-glycero-3-phosphate = 1-hexadecanoyl-2-(4Z,7Z,10Z,13Z,16Z,19Z-docosahexaenoyl)-sn-glycero-3-phosphate + CoA. The catalysed reaction is 1-octadecanoyl-sn-glycero-3-phosphate + (9Z,12Z)-octadecadienoyl-CoA = 1-octadecanoyl-2-(9Z,12Z-octadecadienoyl)-sn-glycero-3-phosphate + CoA. It carries out the reaction 1-octadecanoyl-sn-glycero-3-phosphate + (4Z,7Z,10Z,13Z,16Z,19Z)-docosahexaenoyl-CoA = 1-octadecanoyl-2-(4Z,7Z,10Z,13Z,16Z,19Z-docosahexaenoyl)-sn-glycero-3-phosphate + CoA. It catalyses the reaction (4Z,7Z,10Z,13Z,16Z,19Z)-docosahexaenoyl-CoA + 1-(9Z-octadecenoyl)-sn-glycero-3-phosphate = 1-(9Z-octadecenoyl)-2-(4Z,7Z,10Z,13Z,16Z,19Z-docosahexaenoyl)-sn-glycero-3-phosphate + CoA. It participates in phospholipid metabolism; CDP-diacylglycerol biosynthesis; CDP-diacylglycerol from sn-glycerol 3-phosphate: step 2/3. In terms of biological role, converts 1-acyl-sn-glycerol-3-phosphate (lysophosphatidic acid or LPA) into 1,2-diacyl-sn-glycerol-3-phosphate (phosphatidic acid or PA) by incorporating an acyl moiety at the sn-2 position of the glycerol backbone. Exhibits high acyl-CoA specificity for polyunsaturated fatty acyl-CoA, especially docosahexaenoyl-CoA (22:6-CoA, DHA-CoA). In Macaca fascicularis (Crab-eating macaque), this protein is 1-acyl-sn-glycerol-3-phosphate acyltransferase delta (AGPAT4).